A 217-amino-acid polypeptide reads, in one-letter code: Thymidylate kinase (217 aa).

16–23 lines the ATP pocket; it reads GIDGAGKT.

Belongs to the thymidylate kinase family.

The enzyme catalyses dTMP + ATP = dTDP + ADP. In terms of biological role, phosphorylation of dTMP to form dTDP in both de novo and salvage pathways of dTTP synthesis. This is Thymidylate kinase from Xylella fastidiosa (strain M12).